Here is a 164-residue protein sequence, read N- to C-terminus: NADH-quinone oxidoreductase subunit I (164 aa).

4Fe-4S ferredoxin-type domains lie at Leu-55 to Glu-85 and Thr-95 to Asn-124. [4Fe-4S] cluster contacts are provided by Cys-65, Cys-68, Cys-71, Cys-75, Cys-104, Cys-107, Cys-110, and Cys-114.

The protein belongs to the complex I 23 kDa subunit family. NDH-1 is composed of 14 different subunits. Subunits NuoA, H, J, K, L, M, N constitute the membrane sector of the complex. [4Fe-4S] cluster is required as a cofactor.

The protein localises to the cell inner membrane. The catalysed reaction is a quinone + NADH + 5 H(+)(in) = a quinol + NAD(+) + 4 H(+)(out). Its function is as follows. NDH-1 shuttles electrons from NADH, via FMN and iron-sulfur (Fe-S) centers, to quinones in the respiratory chain. The immediate electron acceptor for the enzyme in this species is believed to be ubiquinone. Couples the redox reaction to proton translocation (for every two electrons transferred, four hydrogen ions are translocated across the cytoplasmic membrane), and thus conserves the redox energy in a proton gradient. This chain is NADH-quinone oxidoreductase subunit I, found in Roseobacter denitrificans (strain ATCC 33942 / OCh 114) (Erythrobacter sp. (strain OCh 114)).